A 232-amino-acid polypeptide reads, in one-letter code: Protein FAM246B (232 aa).

A compositionally biased stretch (basic and acidic residues) spans 19–31 (EVLRRVTGRRRDP). Disordered stretches follow at residues 19-47 (EVLRRVTGRRRDPGPQSNGPGREDARAPG), 80-101 (AAGAGERTGAHSRGSVCSVCGE), 151-179 (ALLPPPPPSPPARREPRAVPRAAPRGPTL), and 191-232 (AASR…GGGD). Residues 211-220 (APARKNHKKM) show a composition bias toward basic residues.

This sequence belongs to the FAM246 family.

The sequence is that of Protein FAM246B from Homo sapiens (Human).